We begin with the raw amino-acid sequence, 410 residues long: Tegument protein VP16 homolog (410 aa).

The segment at 388 to 410 (PPSPSEILPGDPPRPPTCGFLTR) is disordered.

It belongs to the herpesviridae tegument protein VP16 protein family. As to quaternary structure, associates with the VP16-induced complex; binding to host HCFC1 activates VP16 for association with the octamer motif-binding host protein POU2F1, to form a multiprotein-DNA complex responsible for activating transcription of the viral immediate early genes.

It is found in the virion tegument. The protein localises to the host nucleus. Its function is as follows. Transcriptional activator of immediate-early (IE) gene products (alpha genes). Acts as a key activator of lytic infection by initiating the lytic program through the assembly of the transcriptional regulatory VP16-induced complex composed of VP16 and two cellular factors, HCFC1 and POU2F 1. VP16-induced complex represents a regulatory switch: when it is on, it promotes IE-gene expression and thus lytic infection, and when it is off, it limits IE-gene transcription favoring latent infection. May play a role in the aggregation of tegument proteins around nucleocapsids during virus morphogenesis. The chain is Tegument protein VP16 homolog from Varicella-zoster virus (strain Oka vaccine) (HHV-3).